We begin with the raw amino-acid sequence, 237 residues long: Orotate phosphoribosyltransferase (237 aa).

Residue K29 coordinates 5-phospho-alpha-D-ribose 1-diphosphate. F37–F38 is an orotate binding site. 5-phospho-alpha-D-ribose 1-diphosphate contacts are provided by residues Y79–K80, R105, K106, K109, H111, and D130–A138. Orotate contacts are provided by S134 and R162.

This sequence belongs to the purine/pyrimidine phosphoribosyltransferase family. PyrE subfamily. Homodimer. Mg(2+) serves as cofactor.

The enzyme catalyses orotidine 5'-phosphate + diphosphate = orotate + 5-phospho-alpha-D-ribose 1-diphosphate. Its pathway is pyrimidine metabolism; UMP biosynthesis via de novo pathway; UMP from orotate: step 1/2. Its function is as follows. Catalyzes the transfer of a ribosyl phosphate group from 5-phosphoribose 1-diphosphate to orotate, leading to the formation of orotidine monophosphate (OMP). The polypeptide is Orotate phosphoribosyltransferase (Polaromonas naphthalenivorans (strain CJ2)).